Reading from the N-terminus, the 124-residue chain is Small ribosomal subunit protein uS12 (124 aa).

A disordered region spans residues 1-30 (MPTIQQLVRKGRRDKVAKVKTAALKGSPQR). D89 bears the 3-methylthioaspartic acid mark. Residues 105–124 (QGVKNRKQARSRYGAKKEKS) form a disordered region. The segment covering 108–118 (KNRKQARSRYG) has biased composition (basic residues).

It belongs to the universal ribosomal protein uS12 family. In terms of assembly, part of the 30S ribosomal subunit. Contacts proteins S8 and S17. May interact with IF1 in the 30S initiation complex.

Its function is as follows. With S4 and S5 plays an important role in translational accuracy. In terms of biological role, interacts with and stabilizes bases of the 16S rRNA that are involved in tRNA selection in the A site and with the mRNA backbone. Located at the interface of the 30S and 50S subunits, it traverses the body of the 30S subunit contacting proteins on the other side and probably holding the rRNA structure together. The combined cluster of proteins S8, S12 and S17 appears to hold together the shoulder and platform of the 30S subunit. The polypeptide is Small ribosomal subunit protein uS12 (Mycobacterium intracellulare).